The primary structure comprises 404 residues: Activity-regulated cytoskeleton-associated protein (404 aa).

Residues 51 to 78 (EVSKQVERELKGLQKSVGKLENNLEDHV) adopt a coiled-coil conformation. Positions 351-404 (VQGNMDHSEEPSPQRTPEIQSGDSVESMPPSTTASPVPSNGTQPEPPSPPATVI) are disordered. Positions 363–393 (PQRTPEIQSGDSVESMPPSTTASPVPSNGTQ) are enriched in polar residues. Positions 394–404 (PEPPSPPATVI) are enriched in pro residues.

It belongs to the ARC/ARG3.1 family. Homooligomer; homooligomerizes into virion-like capsids. Palmitoylation anchors the protein into the membrane by allowing direct insertion into the hydrophobic core of the lipid bilayer. As to expression, expressed at various levels throughout the brain.

It is found in the extracellular vesicle membrane. Its subcellular location is the postsynaptic cell membrane. It localises to the synapse. The protein resides in the postsynaptic density. The protein localises to the early endosome membrane. It is found in the cell projection. Its subcellular location is the dendrite. It localises to the cytoplasm. The protein resides in the cytoskeleton. The protein localises to the cell cortex. It is found in the dendritic spine. In terms of biological role, master regulator of synaptic plasticity that self-assembles into virion-like capsids that encapsulate RNAs and mediate intercellular RNA transfer in the nervous system. ARC protein is released from neurons in extracellular vesicles that mediate the transfer of ARC mRNA into new target cells, where ARC mRNA can undergo activity-dependent translation. ARC capsids are endocytosed and are able to transfer ARC mRNA into the cytoplasm of neurons. Acts as a key regulator of synaptic plasticity: required for protein synthesis-dependent forms of long-term potentiation (LTP) and depression (LTD) and for the formation of long-term memory. Regulates synaptic plasticity by promoting endocytosis of AMPA receptors (AMPARs) in response to synaptic activity: this endocytic pathway maintains levels of surface AMPARs in response to chronic changes in neuronal activity through synaptic scaling, thereby contributing to neuronal homeostasis. Acts as a postsynaptic mediator of activity-dependent synapse elimination in the developing cerebellum by mediating elimination of surplus climbing fiber synapses. Accumulates at weaker synapses, probably to prevent their undesired enhancement. This suggests that ARC-containing virion-like capsids may be required to eliminate synaptic material. The polypeptide is Activity-regulated cytoskeleton-associated protein (Gallus gallus (Chicken)).